The following is a 160-amino-acid chain: Transmembrane protein 216 (160 aa).

A run of 4 helical transmembrane segments spans residues 41–61, 68–88, 101–121, and 134–154; these read WYFA…GVIL, LILD…RLFY, LFVS…YLLL, and AVLL…ISIF.

Part of the tectonic-like complex (also named B9 complex).

The protein resides in the membrane. The protein localises to the cytoplasm. Its subcellular location is the cytoskeleton. It is found in the cilium basal body. In terms of biological role, part of the tectonic-like complex which is required for tissue-specific ciliogenesis and may regulate ciliary membrane composition. The protein is Transmembrane protein 216 (tmem216) of Danio rerio (Zebrafish).